We begin with the raw amino-acid sequence, 765 residues long: LPS-assembly protein LptD (765 aa).

Residues 1–18 (MQIRYFLALSLLPQVVLA) form the signal peptide.

It belongs to the LptD family. Component of the lipopolysaccharide transport and assembly complex. Interacts with LptE and LptA.

The protein localises to the cell outer membrane. Together with LptE, is involved in the assembly of lipopolysaccharide (LPS) at the surface of the outer membrane. The sequence is that of LPS-assembly protein LptD from Shewanella sp. (strain ANA-3).